A 961-amino-acid chain; its full sequence is E4 ubiquitin-protein ligase UFD2 (961 aa).

The region spanning 880 to 954 (DVPDEFLDPL…LCFKKQKKEE (75 aa)) is the U-box domain.

The protein belongs to the ubiquitin conjugation factor E4 family. Interacts with CDC48. Interacts with the ubiquitin-like domain of RAD23 and DSK2. Interacts with PEX29.

It is found in the cytoplasm. The protein resides in the nucleus. The enzyme catalyses S-ubiquitinyl-[E2 ubiquitin-conjugating enzyme]-L-cysteine + [acceptor protein]-L-lysine = [E2 ubiquitin-conjugating enzyme]-L-cysteine + N(6)-ubiquitinyl-[acceptor protein]-L-lysine.. The protein operates within protein modification; protein ubiquitination. In terms of biological role, E4 ubiquitin chain-elongation enzyme specifically involved in polyubiquitin chain assembly. Binds to CDC48 and elongates mono- and diubiquitinated ERAD substrates presented by the UFD1-NPL4-CDC48/p97 (UNC) AAA ATPase complex to a chain length of 4 to 6 ubiquitin moieties. Delivers these polyubiquitinated substrates to RAD23 and DSK2, which target them to the proteasome. Has E3 ubiquitin-protein ligase activity, accepting ubiquitin from its cognate E2 ubiquitin-conjugating enzyme UBC4. Enhances ubiquitination at 'Lys-48', but not at 'Lys-29' of the Ub moiety. Promotes ubiquitin chain elongation at 'Lys-48' on the DOA10 substrate PEX29. Also involved in the proteolytic processing of the ER-bound transcription factor SPT23. The sequence is that of E4 ubiquitin-protein ligase UFD2 (UFD2) from Saccharomyces cerevisiae (strain ATCC 204508 / S288c) (Baker's yeast).